The sequence spans 287 residues: uncharacterized protein (287 aa).

It belongs to the AllH family.

This is an uncharacterized protein from Escherichia coli (strain K12).